Reading from the N-terminus, the 408-residue chain is MENGLNITSEIGKLQTVLVKRPGSELENITPEYLESLLFDDIPYLKMMQKEHDFFVKTMQDSNIEVLYLEKLAAEALKEASNKENFLTKMIKESNQMDESALYVRDYLMSFDEEEMIKKLMSGLKKSEIPERKKKHLNEMMDEQYPFFLDPLPNLYFTRDPAAVIGSGVTINKMFQPARRRESLFIELILKHHPRFSSQEIPIWSGREEPFPLEGGDELILNEETVLVGVSERTDARAVERLAESLFSRAPKIKRVLAAEIPETRSFMHLDTVFTMVNFAQFTIHPAIQNQQGELNVYILEKSENGLEITPRRDFKRVIAEVLGVPEVDFIPCGGEDVIVSAREQWNDGANTLAIAPGEVITYDRNHVSNDLLRKAGIKVHEVISSELSRGRGGPRCMTMPITRGNLK.

C397 (amidino-cysteine intermediate) is an active-site residue.

This sequence belongs to the arginine deiminase family.

Its subcellular location is the cytoplasm. The catalysed reaction is L-arginine + H2O = L-citrulline + NH4(+). It participates in amino-acid degradation; L-arginine degradation via ADI pathway; carbamoyl phosphate from L-arginine: step 1/2. The protein is Arginine deiminase of Listeria innocua serovar 6a (strain ATCC BAA-680 / CLIP 11262).